We begin with the raw amino-acid sequence, 290 residues long: MTFQELILALDKFWSDRGCVIQQPYDLEVGAGTFNPATFLRVIGPEPYHVAYVEPSRRPTDGRYGENPNRLQHYYQYQVILKPSPPDSQGVYLESLRSFGIDPLEHDIRFVEDDWESPTLGASGLGWEVWLDGMEITQFTYFQQVGGIALSPVSLELTYGLERIAMYLQGVNSVYDLIWSGNVTYGDVHHRGEVEWSHYNFQQADVDMLLQLFNMYEAESHRMNEKGLVLPSYDYCLKCSHVFNLLDARGAISVTERTNYIARVRGMARQVAHAYAAQREAMGYPLLNKW.

This sequence belongs to the class-II aminoacyl-tRNA synthetase family. In terms of assembly, tetramer of two alpha and two beta subunits.

Its subcellular location is the cytoplasm. The catalysed reaction is tRNA(Gly) + glycine + ATP = glycyl-tRNA(Gly) + AMP + diphosphate. The protein is Glycine--tRNA ligase alpha subunit of Syntrophobacter fumaroxidans (strain DSM 10017 / MPOB).